Here is a 537-residue protein sequence, read N- to C-terminus: Phosphoenolpyruvate carboxykinase (ATP) (537 aa).

Residues Arg61, Tyr194, and Lys200 each contribute to the substrate site. ATP contacts are provided by residues Lys200, His219, and 235–243; that span reads GLSGTGKTT. Mn(2+) contacts are provided by Lys200 and His219. A Mn(2+)-binding site is contributed by Asp256. Positions 284, 322, and 448 each coordinate ATP. Arg322 provides a ligand contact to substrate.

The protein belongs to the phosphoenolpyruvate carboxykinase (ATP) family. Mn(2+) is required as a cofactor.

The protein resides in the cytoplasm. It catalyses the reaction oxaloacetate + ATP = phosphoenolpyruvate + ADP + CO2. It functions in the pathway carbohydrate biosynthesis; gluconeogenesis. Its function is as follows. Involved in the gluconeogenesis. Catalyzes the conversion of oxaloacetate (OAA) to phosphoenolpyruvate (PEP) through direct phosphoryl transfer between the nucleoside triphosphate and OAA. The sequence is that of Phosphoenolpyruvate carboxykinase (ATP) from Bradyrhizobium sp. (strain BTAi1 / ATCC BAA-1182).